The sequence spans 278 residues: Hydroxyethylthiazole kinase (278 aa).

Residue Met-48 coordinates substrate. Arg-124 and Thr-175 together coordinate ATP. A substrate-binding site is contributed by Gly-202.

It belongs to the Thz kinase family. It depends on Mg(2+) as a cofactor.

The catalysed reaction is 5-(2-hydroxyethyl)-4-methylthiazole + ATP = 4-methyl-5-(2-phosphooxyethyl)-thiazole + ADP + H(+). The protein operates within cofactor biosynthesis; thiamine diphosphate biosynthesis; 4-methyl-5-(2-phosphoethyl)-thiazole from 5-(2-hydroxyethyl)-4-methylthiazole: step 1/1. Catalyzes the phosphorylation of the hydroxyl group of 4-methyl-5-beta-hydroxyethylthiazole (THZ). The polypeptide is Hydroxyethylthiazole kinase (Clostridium botulinum (strain Eklund 17B / Type B)).